A 115-amino-acid chain; its full sequence is Large ribosomal subunit protein bL19 (115 aa).

Belongs to the bacterial ribosomal protein bL19 family.

This protein is located at the 30S-50S ribosomal subunit interface and may play a role in the structure and function of the aminoacyl-tRNA binding site. This is Large ribosomal subunit protein bL19 from Citrobacter koseri (strain ATCC BAA-895 / CDC 4225-83 / SGSC4696).